We begin with the raw amino-acid sequence, 449 residues long: MDLARYRFDLSIEEVPTSWYNILPDLPEEVPPPLNPKTGEPVDPSALAKLFPKALIEQEVSRERYIEIPGEVHEAYISFARRPTPLLRAVNLERALNTPAEIYYKYEGVTPTGSHKINTALAQAYYNKLEGVERLVTETGAGQWGSALSAAGAYFGVKVRVYMVRVSYLQKPYRRTLMELYGAEVYPSPSDKTEFGRKLLAENPNHPGSLGIAISEAIEDVINSGGNAKYSLGSVLNHVLLHQTVIGLEAEKQFREAGVYPDIMIGAVGGGSNFAGFTYPFIRHRLKGSSSTRFIAVEPKASPSMTRGVYTYDYGDTAGLTPLLKMHTLGHTYQVPPIHAGGLRYHGVAPTLSVLLKHGIVEARAYHQREVFRAAHMFAKAEGIVPAPESAHAVKAAIDEAIKARDEGRRVVIAFNLSGHGLLDLQGYREYLDGTLEDYEPEEIPASRR.

At K116 the chain carries N6-(pyridoxal phosphate)lysine.

It belongs to the TrpB family. Tetramer of two alpha and two beta chains. Pyridoxal 5'-phosphate is required as a cofactor.

The enzyme catalyses (1S,2R)-1-C-(indol-3-yl)glycerol 3-phosphate + L-serine = D-glyceraldehyde 3-phosphate + L-tryptophan + H2O. It functions in the pathway amino-acid biosynthesis; L-tryptophan biosynthesis; L-tryptophan from chorismate: step 5/5. In terms of biological role, the beta subunit is responsible for the synthesis of L-tryptophan from indole and L-serine. This chain is Tryptophan synthase beta chain 2 (trpB2), found in Aeropyrum pernix (strain ATCC 700893 / DSM 11879 / JCM 9820 / NBRC 100138 / K1).